Here is a 285-residue protein sequence, read N- to C-terminus: Transmembrane protein DDB_G0269096 (285 aa).

2 disordered regions span residues 1–25 (MEDRNLERNIGSDISSSSSIDMSQS) and 59–87 (SFENGENNNNNNNNNNNNNNNNNNNNNKN). Low complexity-rich tracts occupy residues 12–25 (SDISSSSSIDMSQS) and 65–85 (NNNNNNNNNNNNNNNNNNNNN). Transmembrane regions (helical) follow at residues 124-144 (LEEIGWTWLASFTGILVLALI), 152-172 (AQMQVLIGSFAASAVIIFGVP), 182-202 (LIMGHFLSAVVGSVIRVALVY), 205-225 (ANFEVACALAVSLSIMLMQFT), and 250-270 (FYFIFVPILSGALIMLLTALV).

It localises to the membrane. This chain is Transmembrane protein DDB_G0269096, found in Dictyostelium discoideum (Social amoeba).